Here is a 327-residue protein sequence, read N- to C-terminus: Ornithine carbamoyltransferase 2, anabolic (327 aa).

Residues R109 and 136–139 (HPTQ) contribute to the carbamoyl phosphate site. L-ornithine is bound by residues N168, D232, and 236–237 (SM). Carbamoyl phosphate is bound by residues 273–274 (CL) and R313.

This sequence belongs to the aspartate/ornithine carbamoyltransferase superfamily. OTCase family. As to quaternary structure, homotrimer.

The protein resides in the cytoplasm. It catalyses the reaction carbamoyl phosphate + L-ornithine = L-citrulline + phosphate + H(+). Its pathway is amino-acid biosynthesis; L-arginine biosynthesis; L-arginine from L-ornithine and carbamoyl phosphate: step 1/3. Its function is as follows. Plays an important role in the survival and pathogenicity of P.syringae. Phaseolotoxin is a virulence factor that inhibits the catalysis of the host OTCase. Phaseolotoxin-producing bacteria do not suffer autointoxication because they possess the anabolic OTCase ArgK which can function even in the presence of phaseolotoxin. Reversibly catalyzes the transfer of the carbamoyl group from carbamoyl phosphate (CP) to the N(epsilon) atom of ornithine (ORN) to produce L-citrulline, which is a substrate for argininosuccinate synthetase, the enzyme involved in the final step in arginine biosynthesis. This Pseudomonas savastanoi pv. phaseolicola (Pseudomonas syringae pv. phaseolicola) protein is Ornithine carbamoyltransferase 2, anabolic.